The sequence spans 104 residues: Large ribosomal subunit protein bL21 (104 aa).

Belongs to the bacterial ribosomal protein bL21 family. Part of the 50S ribosomal subunit. Contacts protein L20.

This protein binds to 23S rRNA in the presence of protein L20. The sequence is that of Large ribosomal subunit protein bL21 from Moorella thermoacetica (strain ATCC 39073 / JCM 9320).